Here is a 395-residue protein sequence, read N- to C-terminus: Nucleoside diphosphate kinase homolog 7 (395 aa).

The DM10 domain maps to 22-110; the sequence is QSERFAFIAE…YTARQLGSRK (89 aa).

This sequence belongs to the NDK family. In terms of assembly, component of sperm flagellar doublet microtubules. Component of the gamma-tubulin ring complex. In terms of tissue distribution, widely expressed. Expressed in the flagellum of epididymal sperm but not in testicular sperm (at protein level).

The protein localises to the cytoplasm. Its subcellular location is the cytoskeleton. The protein resides in the microtubule organizing center. It is found in the centrosome. It localises to the nucleus. The protein localises to the spindle. Its subcellular location is the cilium axoneme. The protein resides in the flagellum axoneme. It is found in the cell projection. It localises to the cilium. Functionally, possesses an intrinsic kinase activity. Displays 3'-5' exonuclease activity with a preference for single-stranded DNA. Does not seem to have nucleoside diphosphate kinase activity. Functional component of the gamma-tubulin ring complex, implicated in the regulation of the microtubule-nucleating activity of the gamma-tubulin ring complex in centrosomes, in a kinase activity-dependent manner. Part of the dynein-decorated doublet microtubules (DMTs) in cilia axoneme, which is required for motile cilia beating. In Rattus norvegicus (Rat), this protein is Nucleoside diphosphate kinase homolog 7 (Nme7).